The chain runs to 1222 residues: ATP-dependent helicase/nuclease subunit A (1222 aa).

Positions 27–483 (HLQENERCRD…RDYQKKPEQG (457 aa)) constitute a UvrD-like helicase ATP-binding domain. 48 to 55 (AIYTSGQN) serves as a coordination point for ATP. A UvrD-like helicase C-terminal domain is found at 512–798 (ESVGDVLYDE…ADVEVATPKQ (287 aa)).

This sequence belongs to the helicase family. AddA subfamily. Heterodimer of AddA and AddB/RexB. It depends on Mg(2+) as a cofactor.

The catalysed reaction is Couples ATP hydrolysis with the unwinding of duplex DNA by translocating in the 3'-5' direction.. The enzyme catalyses ATP + H2O = ADP + phosphate + H(+). The heterodimer acts as both an ATP-dependent DNA helicase and an ATP-dependent, dual-direction single-stranded exonuclease. Recognizes the chi site generating a DNA molecule suitable for the initiation of homologous recombination. The AddA nuclease domain is required for chi fragment generation; this subunit has the helicase and 3' -&gt; 5' nuclease activities. In Streptococcus pyogenes serotype M1, this protein is ATP-dependent helicase/nuclease subunit A.